The chain runs to 199 residues: Ras-related and estrogen-regulated growth inhibitor (199 aa).

GTP is bound by residues 13–20, 60–64, and 118–121; these read GRAGVGKS, DTAGQ, and NKAD.

The protein belongs to the small GTPase superfamily. Ras family. In terms of tissue distribution, detected in heart, brain, placenta, lung, liver, skin, kidney and pancreas. Detected in estrogen receptor-positive breast-derived cell lines, but not in estrogen receptor-negative cell lines. Expression is decreased or lost in a significant proportion of primary breast tumors with poor clinical prognosis.

The protein localises to the cytoplasm. The catalysed reaction is GTP + H2O = GDP + phosphate + H(+). Its function is as follows. Binds GDP/GTP and possesses intrinsic GTPase activity. Has higher affinity for GDP than for GTP. In cell lines overexpression leads to a reduction in the rate of proliferation, colony formation and in tumorigenic potential. This Homo sapiens (Human) protein is Ras-related and estrogen-regulated growth inhibitor (RERG).